A 357-amino-acid chain; its full sequence is Peptide chain release factor 1 (357 aa).

Gln234 bears the N5-methylglutamine mark. A disordered region spans residues 283–313; sequence SKKQEQRSSNRKQQVGSGDRSERIRTYNFPQ.

This sequence belongs to the prokaryotic/mitochondrial release factor family. Post-translationally, methylated by PrmC. Methylation increases the termination efficiency of RF1.

Its subcellular location is the cytoplasm. Its function is as follows. Peptide chain release factor 1 directs the termination of translation in response to the peptide chain termination codons UAG and UAA. The sequence is that of Peptide chain release factor 1 from Borrelia garinii subsp. bavariensis (strain ATCC BAA-2496 / DSM 23469 / PBi) (Borreliella bavariensis).